We begin with the raw amino-acid sequence, 610 residues long: UvrABC system protein C (610 aa).

Residues 16 to 94 enclose the GIY-YIG domain; sequence SQPGVYRMYD…IKLYQPRYNV (79 aa). The UVR domain occupies 204–239; the sequence is DQVLNQLVARMEQASGDLRFEEAGRLRDQIQAVRRV.

This sequence belongs to the UvrC family. In terms of assembly, interacts with UvrB in an incision complex.

The protein resides in the cytoplasm. Functionally, the UvrABC repair system catalyzes the recognition and processing of DNA lesions. UvrC both incises the 5' and 3' sides of the lesion. The N-terminal half is responsible for the 3' incision and the C-terminal half is responsible for the 5' incision. The polypeptide is UvrABC system protein C (Erwinia tasmaniensis (strain DSM 17950 / CFBP 7177 / CIP 109463 / NCPPB 4357 / Et1/99)).